The following is a 105-amino-acid chain: MVKQIESKYAFQEALNSAGEKLVVVDFSATWCGPCKMIKPFFHSLSEKYSNVVFLEVDVDDCQDVASECEVKCMPTFQFFKKGQKVGEFSGANKEKLEATINELI.

A Thioredoxin domain is found at 2 to 105; sequence VKQIESKYAF…KLEATINELI (104 aa). Residue Lys-3 is modified to N6-acetyllysine. Lys-8 is modified (N6-succinyllysine). Active-site nucleophile residues include Cys-32 and Cys-35. Cys-32 and Cys-35 are disulfide-bonded. At Lys-39 the chain carries N6-acetyllysine. S-nitrosocysteine is present on residues Cys-62 and Cys-69. Cys-73 carries the S-nitrosocysteine; alternate modification. Position 94 is an N6-acetyllysine; alternate (Lys-94). Lys-94 is modified (N6-succinyllysine; alternate).

This sequence belongs to the thioredoxin family. In terms of assembly, homodimer; disulfide-linked. Interacts with TXNIP through the redox-active site. Interacts with MAP3K5 and CASP3. Interacts with APEX1; the interaction stimulates the FOS/JUN AP-1 DNA-binding activity in a redox-dependent manner. In the fully reduced protein, both Cys-69 and Cys-73 are nitrosylated in response to nitric oxide (NO). When two disulfide bonds are present in the protein, only Cys-73 is nitrosylated. Cys-73 can serve as donor for nitrosylation of target proteins. As to expression, erythrocytes.

It is found in the nucleus. It localises to the cytoplasm. The protein resides in the secreted. Functionally, participates in various redox reactions through the reversible oxidation of its active center dithiol to a disulfide and catalyzes dithiol-disulfide exchange reactions. Plays a role in the reversible S-nitrosylation of cysteine residues in target proteins, and thereby contributes to the response to intracellular nitric oxide. Nitrosylates the active site Cys of CASP3 in response to nitric oxide (NO), and thereby inhibits caspase-3 activity. Induces the FOS/JUN AP-1 DNA binding activity in ionizing radiation (IR) cells through its oxidation/reduction status and stimulates AP-1 transcriptional activity. In Sus scrofa (Pig), this protein is Thioredoxin (TXN).